Consider the following 100-residue polypeptide: MQLNPTEKDKLLLFTAGMVAERRKNRGVKLNYPESIAYISMLLMEGARDGKTVAQLMSEGATYLSANDVMEGIAEMIHDVQVEATFPDGTKLVTVHNPIV.

This sequence belongs to the urease gamma subunit family. In terms of assembly, heterotrimer of UreA (gamma), UreB (beta) and UreC (alpha) subunits. Three heterotrimers associate to form the active enzyme.

It localises to the cytoplasm. It carries out the reaction urea + 2 H2O + H(+) = hydrogencarbonate + 2 NH4(+). It functions in the pathway nitrogen metabolism; urea degradation; CO(2) and NH(3) from urea (urease route): step 1/1. In Psychrobacter cryohalolentis (strain ATCC BAA-1226 / DSM 17306 / VKM B-2378 / K5), this protein is Urease subunit gamma 2.